The following is a 100-amino-acid chain: Aspartyl/glutamyl-tRNA(Asn/Gln) amidotransferase subunit C (100 aa).

Belongs to the GatC family. In terms of assembly, heterotrimer of A, B and C subunits.

It catalyses the reaction L-glutamyl-tRNA(Gln) + L-glutamine + ATP + H2O = L-glutaminyl-tRNA(Gln) + L-glutamate + ADP + phosphate + H(+). It carries out the reaction L-aspartyl-tRNA(Asn) + L-glutamine + ATP + H2O = L-asparaginyl-tRNA(Asn) + L-glutamate + ADP + phosphate + 2 H(+). Functionally, allows the formation of correctly charged Asn-tRNA(Asn) or Gln-tRNA(Gln) through the transamidation of misacylated Asp-tRNA(Asn) or Glu-tRNA(Gln) in organisms which lack either or both of asparaginyl-tRNA or glutaminyl-tRNA synthetases. The reaction takes place in the presence of glutamine and ATP through an activated phospho-Asp-tRNA(Asn) or phospho-Glu-tRNA(Gln). The chain is Aspartyl/glutamyl-tRNA(Asn/Gln) amidotransferase subunit C from Staphylococcus haemolyticus (strain JCSC1435).